Consider the following 462-residue polypeptide: ATP synthase subunit beta 1 (462 aa).

Residue 152–159 (GGAGVGKT) participates in ATP binding.

This sequence belongs to the ATPase alpha/beta chains family. In terms of assembly, F-type ATPases have 2 components, CF(1) - the catalytic core - and CF(0) - the membrane proton channel. CF(1) has five subunits: alpha(3), beta(3), gamma(1), delta(1), epsilon(1). CF(0) has four main subunits: a(1), b(1), b'(1) and c(9-12).

The protein resides in the cell inner membrane. It carries out the reaction ATP + H2O + 4 H(+)(in) = ADP + phosphate + 5 H(+)(out). Functionally, produces ATP from ADP in the presence of a proton gradient across the membrane. The catalytic sites are hosted primarily by the beta subunits. This Dinoroseobacter shibae (strain DSM 16493 / NCIMB 14021 / DFL 12) protein is ATP synthase subunit beta 1.